Reading from the N-terminus, the 227-residue chain is Germin-like protein subfamily 3 member 2 (227 aa).

An N-terminal signal peptide occupies residues 1 to 24 (MEANTLFLLKALCLLCFNVCFTLA). The cysteines at positions 34 and 54 are disulfide-linked. N-linked (GlcNAc...) asparagine glycosylation is found at asparagine 56 and asparagine 75. Residues 68 to 213 (SGLKTAGNFT…AFGLSLKQIG (146 aa)) form the Cupin type-1 domain. 4 residues coordinate Mn(2+): histidine 115, histidine 117, glutamate 122, and histidine 161.

It belongs to the germin family. As to quaternary structure, oligomer (believed to be a pentamer but probably hexamer).

The protein resides in the secreted. Its subcellular location is the extracellular space. It is found in the apoplast. May play a role in plant defense. Probably has no oxalate oxidase activity even if the active site is conserved. The sequence is that of Germin-like protein subfamily 3 member 2 from Arabidopsis thaliana (Mouse-ear cress).